Here is a 118-residue protein sequence, read N- to C-terminus: uncharacterized protein (118 aa).

A helical membrane pass occupies residues 95–115; sequence IIINLVIILAMYAPEIIGKLL.

Belongs to the M.jannaschii MJ0023/MJ0349/MJ1072/MJ1074/MJ1107/MJECL16 family.

The protein resides in the membrane. This is an uncharacterized protein from Methanocaldococcus jannaschii (strain ATCC 43067 / DSM 2661 / JAL-1 / JCM 10045 / NBRC 100440) (Methanococcus jannaschii).